The primary structure comprises 215 residues: Large ribosomal subunit protein bL25 (215 aa).

The segment at 174-215 (ETVVTVQPPATEKEEETEAAVTDSEPEVINEKEEPAEEAKEE) is disordered. The span at 186–215 (KEEETEAAVTDSEPEVINEKEEPAEEAKEE) shows a compositional bias: acidic residues.

This sequence belongs to the bacterial ribosomal protein bL25 family. CTC subfamily. As to quaternary structure, part of the 50S ribosomal subunit; part of the 5S rRNA/L5/L18/L25 subcomplex. Contacts the 5S rRNA. Binds to the 5S rRNA independently of L5 and L18.

In terms of biological role, this is one of the proteins that binds to the 5S RNA in the ribosome where it forms part of the central protuberance. This chain is Large ribosomal subunit protein bL25, found in Halalkalibacterium halodurans (strain ATCC BAA-125 / DSM 18197 / FERM 7344 / JCM 9153 / C-125) (Bacillus halodurans).